The sequence spans 113 residues: Hydrogenase maturation factor HypA (113 aa).

Ni(2+) is bound at residue histidine 2. Zn(2+) contacts are provided by cysteine 70, cysteine 73, cysteine 86, and cysteine 88.

It belongs to the HypA/HybF family.

Its function is as follows. Involved in the maturation of [NiFe] hydrogenases. Required for nickel insertion into the metal center of the hydrogenase. This is Hydrogenase maturation factor HypA from Nostoc punctiforme (strain ATCC 29133 / PCC 73102).